Here is a 449-residue protein sequence, read N- to C-terminus: Guanine nucleotide-binding protein alpha-2 subunit (449 aa).

Positions 1 to 91 (MGLCASSEKN…TATANTSGSQ (91 aa)) are disordered. G2 is lipidated: N-myristoyl glycine. Residue C4 is the site of S-palmitoyl cysteine attachment. Polar residues-rich tracts occupy residues 7–23 (SEKNGSTPDTQTASAGS) and 38–48 (QKTVRTVNTAN). Over residues 49-59 (QQEKQQQRQQQ) the composition is skewed to low complexity. Over residues 72-91 (NGSINNAISPTATANTSGSQ) the composition is skewed to polar residues. Residues 122 to 448 (KELKVLLLGA…ENTLKDSGVL (327 aa)) enclose the G-alpha domain. Positions 125–138 (KVLLLGAGESGKST) are G1 motif. Residues E133, S134, G135, K136, S137, T138, D245, L270, T276, G299, N365, K366, D368, and A420 each contribute to the GTP site. S137 is a binding site for Mg(2+). Residues 268-276 (DILRSRQMT) form a G2 motif region. Position 276 (T276) interacts with Mg(2+). The tract at residues 292–301 (MHIYDVGGQR) is G3 motif. The tract at residues 361-368 (VLFLNKID) is G4 motif. Residues 418-423 (TQATDT) form a G5 motif region.

Belongs to the G-alpha family. G(q) subfamily. As to quaternary structure, g proteins are composed of 3 units; alpha, beta and gamma. The alpha chain contains the guanine nucleotide binding site. GPA2 interacts with the kelch repeat beta-mimic proteins GPB1 and GPB2 and with the gamma subunit GPG1. Interacts with the G protein coupled receptor GPR1. Also interacts with regulators of G protein signaling (RGS) protein RGS2. Requires Mg(2+) as cofactor. In terms of processing, myristoylation at Gly-2 and palmitoylation at Cys-4 are required for membrane localization and function of the protein.

The protein localises to the cell membrane. Alternates between an inactive form bound to GDP and an active form bound to GTP. Activated by the G protein coupled receptor (GPCR) GPR1, which serves as a guanine nucleotide-exchange factor (GEF), and inactivated by RGS2, acting as a GTPase-activating protein (GAP) for GPA2. Its function is as follows. Alpha subunit of the heterotrimeric guanine nucleotide-binding protein (G protein) involved in glucose-induced cAMP signaling. Binds to its cognate transmembrane receptor GPR1, which senses extracellular carbon sources, and activates cAMP-PKA signaling and governs diploid pseudohyphal differentiation and haploid invasive growth. The G protein beta-mimic proteins GPB1 and GPB2 inhibit GPA2-GPR1 coupling, probably to reduce signaling in the absence of glucose. This is Guanine nucleotide-binding protein alpha-2 subunit (GPA2) from Saccharomyces cerevisiae (strain ATCC 204508 / S288c) (Baker's yeast).